Reading from the N-terminus, the 223-residue chain is MRDEIATTVFFVTRLVKKHDKLSKQQIEDFAEKLMTILFETYRSHWHSDCPSKGQAFRCIRINNNQNKDPILERACVESNVDFSHLGLPKEMTIWVDPFEVCCRYGEKNHPFTVASFKGRWEEWELYQQISYAVSRASSDVSSGTSCDEESCSKEPRVIPKVSNPKSIYQVENLKQPFQSWLQIPRKKNVVDGRVGLLGNTYHGSQKHPKCYRPAMHRLDRIL.

The protein belongs to the BTG family. Interacts with CNOT7. Interacts with EIF4E. Interacts with CNOT8. In terms of tissue distribution, expressed in oocytes after germinal vesicle breakdown. Expressed in testis and in olfactory epithelium.

Adapter protein that bridges CNOT7, a catalytic subunit of the CCR4-NOT complex, to EIF4E. Facilitates maternal mRNAs decay during the maturation of oocytes and in the fertilized egg, and is required for the maternal-zygotic transition (MZT), zygotic cleavage and initiation of embryonic development. The sequence is that of Protein BTG4 (BTG4) from Homo sapiens (Human).